The following is a 264-amino-acid chain: ATP synthase subunit a (264 aa).

Transmembrane regions (helical) follow at residues 29–49 (TWHIDSLFFSVGLGVLFLWIF), 87–107 (NALIAPLALTIFVWVFMMNFM), 134–154 (DVNITFSLAIGVFVLIIYYSI), 177–197 (IPVNLLLETVTLIAKPISLAL), 208–228 (LIFILIALMYGTNLLLSSLGV), and 235–255 (LIFHILVITLQAFIFMMLTIV).

Belongs to the ATPase A chain family. In terms of assembly, F-type ATPases have 2 components, CF(1) - the catalytic core - and CF(0) - the membrane proton channel. CF(1) has five subunits: alpha(3), beta(3), gamma(1), delta(1), epsilon(1). CF(0) has three main subunits: a(1), b(2) and c(9-12). The alpha and beta chains form an alternating ring which encloses part of the gamma chain. CF(1) is attached to CF(0) by a central stalk formed by the gamma and epsilon chains, while a peripheral stalk is formed by the delta and b chains.

It is found in the cell inner membrane. Its function is as follows. Key component of the proton channel; it plays a direct role in the translocation of protons across the membrane. This Shewanella sp. (strain MR-4) protein is ATP synthase subunit a.